A 72-amino-acid polypeptide reads, in one-letter code: MAEIKKGSLVRVVREKLENSLEAKASDNRFPAYIFESQGEIVDTRGDYAFIKFGKVPTPNIWLRLDQLEKFE.

Belongs to the complex I NdhO subunit family. In terms of assembly, NDH-1 can be composed of about 15 different subunits; different subcomplexes with different compositions have been identified which probably have different functions.

The protein localises to the cellular thylakoid membrane. It catalyses the reaction a plastoquinone + NADH + (n+1) H(+)(in) = a plastoquinol + NAD(+) + n H(+)(out). It carries out the reaction a plastoquinone + NADPH + (n+1) H(+)(in) = a plastoquinol + NADP(+) + n H(+)(out). In terms of biological role, NDH-1 shuttles electrons from an unknown electron donor, via FMN and iron-sulfur (Fe-S) centers, to quinones in the respiratory and/or the photosynthetic chain. The immediate electron acceptor for the enzyme in this species is believed to be plastoquinone. Couples the redox reaction to proton translocation, and thus conserves the redox energy in a proton gradient. Cyanobacterial NDH-1 also plays a role in inorganic carbon-concentration. The polypeptide is NAD(P)H-quinone oxidoreductase subunit O (Trichodesmium erythraeum (strain IMS101)).